The sequence spans 354 residues: Rhodopsin (354 aa).

The Extracellular portion of the chain corresponds to 1-36 (MNGTEGPNFYIPMSNKTGVVRSPFEYPQYYLAEPWK). N-linked (GlcNAc...) asparagine glycans are attached at residues asparagine 2 and asparagine 15. A helical membrane pass occupies residues 37–61 (YSILAAYMFLLILLGFPINFMTLYV). Residues 62–73 (TIQHKKLRTPLN) lie on the Cytoplasmic side of the membrane. Residues 74 to 96 (YILLNLAFANHFMVLCGFTITLY) form a helical membrane-spanning segment. Topologically, residues 97 to 110 (TSLHGYFVFGQSGC) are extracellular. The cysteines at positions 110 and 187 are disulfide-linked. A helical membrane pass occupies residues 111-133 (YFEGFFATLGGEIALWSLVALAI). The 'Ionic lock' involved in activated form stabilization signature appears at 134–136 (ERY). Over 134–152 (ERYIVVCKPMSNFRFGENH) the chain is Cytoplasmic. Residues 153 to 173 (AMMGVAFTWIMALACAVPPLF) traverse the membrane as a helical segment. Topologically, residues 174–202 (GWSRYIPEGMQCSCGVDYYTLKPEINNES) are extracellular. A helical transmembrane segment spans residues 203-224 (FVIYMFVVHFLIPLIIITFCYG). The Cytoplasmic portion of the chain corresponds to 225–252 (RLVCTVKEAAAQQQESATTQKAEKEVTR). The helical transmembrane segment at 253–274 (MVIIMVIFFLICWVPYAYVAFY) threads the bilayer. Residues 275–286 (IFCNQGSEFGPI) lie on the Extracellular side of the membrane. The chain crosses the membrane as a helical span at residues 287–308 (FMTVPAFFAKSSAIYNPVIYIM). Lysine 296 carries the N6-(retinylidene)lysine modification. Over 309-354 (LNKQFRNCMITTLCCGKNPFGDDDASSAATSKTEATSVSTSQVSPA) the chain is Cytoplasmic. 2 S-palmitoyl cysteine lipidation sites follow: cysteine 322 and cysteine 323. The tract at residues 332–354 (DASSAATSKTEATSVSTSQVSPA) is disordered. Low complexity predominate over residues 334–354 (SSAATSKTEATSVSTSQVSPA).

This sequence belongs to the G-protein coupled receptor 1 family. Opsin subfamily. Post-translationally, contains one covalently linked retinal chromophore. Upon light absorption, the covalently bound 11-cis-retinal is converted to all-trans-retinal. After hydrolysis of the Schiff base and release of the covalently bound all-trans-retinal, active rhodopsin is regenerated by binding of a fresh molecule of 11-cis-retinal.

The protein resides in the membrane. It is found in the cell projection. It localises to the cilium. The protein localises to the photoreceptor outer segment. Functionally, photoreceptor required for image-forming vision at low light intensity. Required for photoreceptor cell viability after birth. Light-induced isomerization of 11-cis to all-trans retinal triggers a conformational change that activates signaling via G-proteins. Subsequent receptor phosphorylation mediates displacement of the bound G-protein alpha subunit by arrestin and terminates signaling. This is Rhodopsin (RHO) from Rana temporaria (European common frog).